We begin with the raw amino-acid sequence, 313 residues long: Protein FixB (313 aa).

Position 255–283 (255–283) interacts with FAD; that stretch reads LYLAVGISGQIQHMVGANASQTIFAINKD.

It belongs to the ETF alpha-subunit/FixB family. In terms of assembly, heterodimer of FixA and FixB.

The protein operates within amine and polyamine metabolism; carnitine metabolism. In terms of biological role, required for anaerobic carnitine reduction. May bring reductant to CaiA. The chain is Protein FixB from Escherichia coli O8 (strain IAI1).